The following is a 235-amino-acid chain: MKYKRILLKLSGEALMGEQKYGIDSQVLIRYANEIKAIADKGVEITIVVGGGNIYRGIEAAATGIDRVQGDYMGMLATVINCMALQSALENIGLDTRLMSGIKIEQVCESFIRRRAIRHLEKGRIVMFGAGTGNPYFTTDTAASLRAIEIEAEVVLKGTRVDGVYTADPEKDPTATRYTTITFDEAYAKGLNIMDMTAFTLCKENELPIIIFDMNRPGNLLKVLEGESVGTLVKL.

Position 9–12 (9–12 (KLSG)) interacts with ATP. Glycine 51 provides a ligand contact to UMP. ATP contacts are provided by glycine 52 and arginine 56. UMP is bound by residues aspartate 71 and 132-139 (TGNPYFTT). The ATP site is built by threonine 159, tyrosine 165, and aspartate 168.

This sequence belongs to the UMP kinase family. In terms of assembly, homohexamer.

The protein resides in the cytoplasm. The enzyme catalyses UMP + ATP = UDP + ADP. The protein operates within pyrimidine metabolism; CTP biosynthesis via de novo pathway; UDP from UMP (UMPK route): step 1/1. Inhibited by UTP. Its function is as follows. Catalyzes the reversible phosphorylation of UMP to UDP. The chain is Uridylate kinase from Cytophaga hutchinsonii (strain ATCC 33406 / DSM 1761 / CIP 103989 / NBRC 15051 / NCIMB 9469 / D465).